We begin with the raw amino-acid sequence, 110 residues long: UPF0122 protein spr1167 (110 aa).

Belongs to the UPF0122 family.

Its function is as follows. Might take part in the signal recognition particle (SRP) pathway. This is inferred from the conservation of its genetic proximity to ftsY/ffh. May be a regulatory protein. The protein is UPF0122 protein spr1167 of Streptococcus pneumoniae (strain ATCC BAA-255 / R6).